The chain runs to 295 residues: Small ribosomal subunit protein uS2 (295 aa).

S2 is modified (N-acetylserine). S43 bears the Phosphoserine mark. K52 carries the N6-acetyllysine modification. Residues 54–113 are interaction with PPP1R16B; it reads TWEKLLLAARAIVAIENPADVSVISSRNTGQRAVLKFAAATGATPIAGRFTPGTFTNQIQ. K89 carries the N6-acetyllysine; alternate modification. A Glycyl lysine isopeptide (Lys-Gly) (interchain with G-Cter in SUMO2); alternate cross-link involves residue K89. T97 bears the Phosphothreonine mark. Laminin-binding regions lie at residues 161–180 and 205–229; these read IPCN…MLAR and RDPE…EFQG. 5 [DE]-W-[ST] repeats span residues 230–232, 247–249, 266–268, 275–277, and 293–295; these read EWT, DWS, and EWS. The interval 242-295 is laminin-binding; that stretch reads QPEVADWSEGVQVPSVPIQQFPTEDWSAQPATEDWSAAPTAQATEWVGATTEWS. Residues 266 to 295 are disordered; it reads DWSAQPATEDWSAAPTAQATEWVGATTEWS.

The protein belongs to the universal ribosomal protein uS2 family. Monomer (37LRP) and homodimer (67LR). Component of the small ribosomal subunit. Mature ribosomes consist of a small (40S) and a large (60S) subunit. The 40S subunit contains about 33 different proteins and 1 molecule of RNA (18S). The 60S subunit contains about 49 different proteins and 3 molecules of RNA (28S, 5.8S and 5S). Interacts with RPS21. Interacts with several laminins including at least LAMB1. Interacts with MDK. Interacts with PRNP. The mature dimeric form interacts with PPP1R16B (via its fourth ankyrin repeat). Interacts with PPP1CA only in the presence of PPP1R16B. Acylated. Acylation may be a prerequisite for conversion of the monomeric 37 kDa laminin receptor precursor (37LRP) to the mature dimeric 67 kDa laminin receptor (67LR), and may provide a mechanism for membrane association. In terms of processing, cleaved by stromelysin-3 (ST3) at the cell surface. Cleavage by stromelysin-3 may be a mechanism to alter cell-extracellular matrix interactions.

The protein resides in the cell membrane. It localises to the cytoplasm. The protein localises to the nucleus. Functionally, required for the assembly and/or stability of the 40S ribosomal subunit. Required for the processing of the 20S rRNA-precursor to mature 18S rRNA in a late step of the maturation of 40S ribosomal subunits. Also functions as a cell surface receptor for laminin. Plays a role in cell adhesion to the basement membrane and in the consequent activation of signaling transduction pathways. May play a role in cell fate determination and tissue morphogenesis. Also acts as a receptor for several other ligands, including the pathogenic prion protein, viruses, and bacteria. Acts as a PPP1R16B-dependent substrate of PPP1CA. Enables malignant tumor cells to penetrate laminin tissue and vessel barriers. Activates precursor thymic anti-OFA/iLRP specific cytotoxic T-cell. May induce CD8 T-suppressor cells secreting IL-10. The chain is Small ribosomal subunit protein uS2 (Rpsa) from Mus musculus (Mouse).